The primary structure comprises 752 residues: Photosystem I P700 chlorophyll a apoprotein A1 (752 aa).

A run of 8 helical transmembrane segments spans residues 73–96 (IFSAHFGQLAIIFLWVSQAYFHGA), 159–182 (LYWTAMGGLMMSALMVFAGWFHYH), 198–222 (MNHHLAGLLGLGCLSWSGHQIHISL), 294–312 (TAHHHLALAVLFIFAGHMY), 349–372 (WHAQLAINLAMMGSLSIIVAHHMY), 388–414 (LSLFTHHMWIGGFCVCGAAAHGAIFMV), 436–458 (AIISHLNWVCIFLGTHSFGLYIH), and 533–551 (FLVHHIHAFTIHVTVLILL). Positions 575 and 584 each coordinate [4Fe-4S] cluster. 2 helical membrane-spanning segments follow: residues 591 to 612 (HIFLGLFWMYNCISVVIFHFSW) and 666 to 688 (LSAYGIIFLGAHFIWAFSLMFLF). Chlorophyll a' is bound at residue histidine 677. Chlorophyll a is bound by residues methionine 685 and tyrosine 693. Tryptophan 694 contributes to the phylloquinone binding site. The helical transmembrane segment at 726 to 746 (AVGLAHYLLGGIGTTWSFFLA) threads the bilayer.

This sequence belongs to the PsaA/PsaB family. As to quaternary structure, the PsaA/B heterodimer binds the P700 chlorophyll special pair and subsequent electron acceptors. PSI consists of a core antenna complex that captures photons, and an electron transfer chain that converts photonic excitation into a charge separation. The eukaryotic PSI reaction center is composed of at least 11 subunits. Requires P700 is a chlorophyll a/chlorophyll a' dimer, A0 is one or more chlorophyll a, A1 is one or both phylloquinones and FX is a shared 4Fe-4S iron-sulfur center. as cofactor.

The protein localises to the plastid. It localises to the chloroplast thylakoid membrane. The enzyme catalyses reduced [plastocyanin] + hnu + oxidized [2Fe-2S]-[ferredoxin] = oxidized [plastocyanin] + reduced [2Fe-2S]-[ferredoxin]. PsaA and PsaB bind P700, the primary electron donor of photosystem I (PSI), as well as the electron acceptors A0, A1 and FX. PSI is a plastocyanin/cytochrome c6-ferredoxin oxidoreductase, converting photonic excitation into a charge separation, which transfers an electron from the donor P700 chlorophyll pair to the spectroscopically characterized acceptors A0, A1, FX, FA and FB in turn. Oxidized P700 is reduced on the lumenal side of the thylakoid membrane by plastocyanin or cytochrome c6. This chain is Photosystem I P700 chlorophyll a apoprotein A1, found in Emiliania huxleyi (Coccolithophore).